We begin with the raw amino-acid sequence, 350 residues long: Glycerol-3-phosphate dehydrogenase [NAD(+)], cytoplasmic (350 aa).

NAD(+) contacts are provided by residues 11–16, phenylalanine 98, lysine 121, and alanine 155; that span reads GSGNWG. Lysine 121 is a binding site for substrate. The active-site Proton acceptor is the lysine 206. The NAD(+) site is built by arginine 270 and glutamine 299. Substrate is bound at residue 270-271; that stretch reads RN.

This sequence belongs to the NAD-dependent glycerol-3-phosphate dehydrogenase family. In terms of assembly, homodimer.

It is found in the cytoplasm. It catalyses the reaction sn-glycerol 3-phosphate + NAD(+) = dihydroxyacetone phosphate + NADH + H(+). It participates in phospholipid metabolism; alpha-glycerophosphate cycle. The sequence is that of Glycerol-3-phosphate dehydrogenase [NAD(+)], cytoplasmic (Gpdh1) from Drosophila ezoana (Fruit fly).